The chain runs to 148 residues: Deoxyuridine 5'-triphosphate nucleotidohydrolase (148 aa).

Residues 67-69, N80, 84-86, and M94 each bind substrate; these read RSG and LID.

This sequence belongs to the dUTPase family. Mg(2+) is required as a cofactor.

It catalyses the reaction dUTP + H2O = dUMP + diphosphate + H(+). It participates in pyrimidine metabolism; dUMP biosynthesis; dUMP from dCTP (dUTP route): step 2/2. In terms of biological role, this enzyme is involved in nucleotide metabolism: it produces dUMP, the immediate precursor of thymidine nucleotides and it decreases the intracellular concentration of dUTP so that uracil cannot be incorporated into DNA. This Burkholderia mallei (strain NCTC 10247) protein is Deoxyuridine 5'-triphosphate nucleotidohydrolase.